The chain runs to 632 residues: MAU2 chromatid cohesion factor homolog (632 aa).

TPR repeat units follow at residues Gly453 to Glu486 and Ser493 to Ile526.

It belongs to the SCC4/mau-2 family. As to quaternary structure, interacts with Nipped-B to form the cohesin loading complex.

The protein resides in the nucleus. Its subcellular location is the nucleoplasm. In terms of biological role, required for association of the cohesin complex with chromatin during interphase. Plays a role in sister chromatid cohesion and normal progression through prometaphase. This is MAU2 chromatid cohesion factor homolog from Drosophila erecta (Fruit fly).